The primary structure comprises 374 residues: Queuine tRNA-ribosyltransferase (374 aa).

Asp-89 (proton acceptor) is an active-site residue. Residues 89–93 (DSGGF), Asp-143, Gln-187, and Gly-214 each bind substrate. The segment at 245–251 (GVGKPED) is RNA binding. The active-site Nucleophile is the Asp-264. Residues 269–273 (TRNAR) form an RNA binding; important for wobble base 34 recognition region. The Zn(2+) site is built by Cys-302, Cys-304, Cys-307, and His-333.

This sequence belongs to the queuine tRNA-ribosyltransferase family. As to quaternary structure, homodimer. Within each dimer, one monomer is responsible for RNA recognition and catalysis, while the other monomer binds to the replacement base PreQ1. Requires Zn(2+) as cofactor.

It catalyses the reaction 7-aminomethyl-7-carbaguanine + guanosine(34) in tRNA = 7-aminomethyl-7-carbaguanosine(34) in tRNA + guanine. It participates in tRNA modification; tRNA-queuosine biosynthesis. Functionally, catalyzes the base-exchange of a guanine (G) residue with the queuine precursor 7-aminomethyl-7-deazaguanine (PreQ1) at position 34 (anticodon wobble position) in tRNAs with GU(N) anticodons (tRNA-Asp, -Asn, -His and -Tyr). Catalysis occurs through a double-displacement mechanism. The nucleophile active site attacks the C1' of nucleotide 34 to detach the guanine base from the RNA, forming a covalent enzyme-RNA intermediate. The proton acceptor active site deprotonates the incoming PreQ1, allowing a nucleophilic attack on the C1' of the ribose to form the product. After dissociation, two additional enzymatic reactions on the tRNA convert PreQ1 to queuine (Q), resulting in the hypermodified nucleoside queuosine (7-(((4,5-cis-dihydroxy-2-cyclopenten-1-yl)amino)methyl)-7-deazaguanosine). This is Queuine tRNA-ribosyltransferase from Yersinia pseudotuberculosis serotype O:1b (strain IP 31758).